The chain runs to 417 residues: NADH-dependent phenylglyoxylate dehydrogenase subunit alpha (417 aa).

As to quaternary structure, dimer of heteropentamers composed of an alpha (PadG), a beta (PadI), a gamma (PadE), a delta (PadF) and an epsilon (PadH) subunit.

It catalyses the reaction phenylglyoxylate + NAD(+) + CoA = benzoyl-CoA + CO2 + NADH. Its activity is regulated as follows. Activated by magnesium ions and thiamine diphosphate. In terms of biological role, involved in the anaerobic metabolism of phenylalanine and phenylacetate. Catalyzes the oxidative decarboxylation of phenylglyoxylate to benzoyl-CoA and CO(2). It can also react slowly with 2-oxo-3-methylbutanoate and use different electron acceptors such as benzyl viologen, methyl viologen, FAD or FMN, but NAD seems to be the physiological electron acceptor. Also catalyzes an isotope exchange between CO(2) and the carboxyl group which proves partial or complete reversibility of the oxidative decarboxylation reaction. The chain is NADH-dependent phenylglyoxylate dehydrogenase subunit alpha (padG) from Aromatoleum evansii (Azoarcus evansii).